The sequence spans 90 residues: Bombyxin B-5 (90 aa).

The N-terminal stretch at 1-20 (MMKTAVMFILVVVISLTYSS) is a signal peptide. Cystine bridges form between Cys30–Cys75, Cys42–Cys88, and Cys74–Cys79. Positions 49-64 (GGAQYAPYWQETYLRS) are cleaved as a propeptide — c peptide like.

It belongs to the insulin family. Heterodimer of a B chain and an A chain linked by two disulfide bonds.

It is found in the secreted. Functionally, brain peptide responsible for activation of prothoracic glands to produce ecdysone in insects. The polypeptide is Bombyxin B-5 (BBXB5) (Bombyx mori (Silk moth)).